A 172-amino-acid chain; its full sequence is MHQLGIEWNKLIAQIINFVIVLWVLNRFAFKPVLKILEERRKKIAESLQNAEKIKQELAEAEEARKEILRKANEQASFIVAEAQKVASYQGEKKIQEAVEEAKRVLKKAEESAKLEREKAKEEMRREILNLVIEITSKVVGKTLTLDDQERLKNEVLSKLPQKEGHEAYSRN.

Residues 11–30 (LIAQIINFVIVLWVLNRFAF) traverse the membrane as a helical segment.

It belongs to the ATPase B chain family. F-type ATPases have 2 components, F(1) - the catalytic core - and F(0) - the membrane proton channel. F(1) has five subunits: alpha(3), beta(3), gamma(1), delta(1), epsilon(1). F(0) has three main subunits: a(1), b(2) and c(10-14). The alpha and beta chains form an alternating ring which encloses part of the gamma chain. F(1) is attached to F(0) by a central stalk formed by the gamma and epsilon chains, while a peripheral stalk is formed by the delta and b chains.

The protein resides in the cell inner membrane. F(1)F(0) ATP synthase produces ATP from ADP in the presence of a proton or sodium gradient. F-type ATPases consist of two structural domains, F(1) containing the extramembraneous catalytic core and F(0) containing the membrane proton channel, linked together by a central stalk and a peripheral stalk. During catalysis, ATP synthesis in the catalytic domain of F(1) is coupled via a rotary mechanism of the central stalk subunits to proton translocation. Its function is as follows. Component of the F(0) channel, it forms part of the peripheral stalk, linking F(1) to F(0). The protein is ATP synthase subunit b of Methylacidiphilum infernorum (isolate V4) (Methylokorus infernorum (strain V4)).